The chain runs to 28 residues: Somatostatin-2 (28 aa).

Residues Cys-17 and Cys-28 are joined by a disulfide bond.

It belongs to the somatostatin family.

It localises to the secreted. Its function is as follows. Somatostatin inhibits the release of somatotropin. The protein is Somatostatin-2 (sst2) of Oreochromis niloticus (Nile tilapia).